Reading from the N-terminus, the 266-residue chain is 5'-nucleotidase SurE (266 aa).

4 residues coordinate a divalent metal cation: Asp-8, Asp-9, Ser-39, and Asn-95.

The protein belongs to the SurE nucleotidase family. Requires a divalent metal cation as cofactor.

The protein localises to the cytoplasm. The enzyme catalyses a ribonucleoside 5'-phosphate + H2O = a ribonucleoside + phosphate. Its function is as follows. Nucleotidase that shows phosphatase activity on nucleoside 5'-monophosphates. This is 5'-nucleotidase SurE from Syntrophus aciditrophicus (strain SB).